A 687-amino-acid chain; its full sequence is Threonine--tRNA ligase (687 aa).

The TGS domain occupies 1–67 (MAHLIEAAPN…EQDSKFTPVP (67 aa)). Residues 266 to 572 (DHRRLGAELD…LLEHYAGAFP (307 aa)) are catalytic. Residues Cys-371, His-422, and His-549 each contribute to the Zn(2+) site.

The protein belongs to the class-II aminoacyl-tRNA synthetase family. In terms of assembly, homodimer. Requires Zn(2+) as cofactor.

Its subcellular location is the cytoplasm. The enzyme catalyses tRNA(Thr) + L-threonine + ATP = L-threonyl-tRNA(Thr) + AMP + diphosphate + H(+). Functionally, catalyzes the attachment of threonine to tRNA(Thr) in a two-step reaction: L-threonine is first activated by ATP to form Thr-AMP and then transferred to the acceptor end of tRNA(Thr). Also edits incorrectly charged L-seryl-tRNA(Thr). This is Threonine--tRNA ligase from Corynebacterium diphtheriae (strain ATCC 700971 / NCTC 13129 / Biotype gravis).